The sequence spans 390 residues: Phosphopentomutase (390 aa).

Positions 11, 283, 288, 324, 325, and 336 each coordinate Mn(2+).

It belongs to the phosphopentomutase family. Requires Mn(2+) as cofactor.

The protein localises to the cytoplasm. It catalyses the reaction 2-deoxy-alpha-D-ribose 1-phosphate = 2-deoxy-D-ribose 5-phosphate. It carries out the reaction alpha-D-ribose 1-phosphate = D-ribose 5-phosphate. Its pathway is carbohydrate degradation; 2-deoxy-D-ribose 1-phosphate degradation; D-glyceraldehyde 3-phosphate and acetaldehyde from 2-deoxy-alpha-D-ribose 1-phosphate: step 1/2. Its function is as follows. Isomerase that catalyzes the conversion of deoxy-ribose 1-phosphate (dRib-1-P) and ribose 1-phosphate (Rib-1-P) to deoxy-ribose 5-phosphate (dRib-5-P) and ribose 5-phosphate (Rib-5-P), respectively. The sequence is that of Phosphopentomutase from Alkaliphilus oremlandii (strain OhILAs) (Clostridium oremlandii (strain OhILAs)).